Consider the following 81-residue polypeptide: Costars family protein ABRACL (81 aa).

Residue Met1 is modified to N-acetylmethionine.

It belongs to the costars family.

This is Costars family protein ABRACL (ABRACL) from Bos taurus (Bovine).